The primary structure comprises 539 residues: Carotene epsilon-monooxygenase, chloroplastic (539 aa).

The transit peptide at Met-1–Arg-36 directs the protein to the chloroplast. Cys-487 lines the heme pocket.

This sequence belongs to the cytochrome P450 family. The cofactor is heme.

Its subcellular location is the plastid. It localises to the chloroplast. It carries out the reaction alpha-carotene + reduced [NADPH--hemoprotein reductase] + O2 = alpha-cryptoxanthin + oxidized [NADPH--hemoprotein reductase] + H2O + H(+). The enzyme catalyses zeinoxanthin + reduced [NADPH--hemoprotein reductase] + O2 = lutein + oxidized [NADPH--hemoprotein reductase] + H2O + H(+). Its function is as follows. Heme-containing cytochrome P450 involved in the biosynthesis of xanthophylls. Specific for epsilon- and beta-ring hydroxylation of alpha-carotene. Has only a low activity toward the beta-rings of beta-carotene. The preferred substrate in planta is not alpha-carotene but the epsilon-ring of zeinoxanthin. Possesses a major beta-carotene hydroxylase activity in planta when depleted in its preferred substrate alpha-carotene. The protein is Carotene epsilon-monooxygenase, chloroplastic (CYP97C1) of Arabidopsis thaliana (Mouse-ear cress).